The sequence spans 89 residues: Small ribosomal subunit protein uS15 (89 aa).

It belongs to the universal ribosomal protein uS15 family. Part of the 30S ribosomal subunit. Forms a bridge to the 50S subunit in the 70S ribosome, contacting the 23S rRNA.

Functionally, one of the primary rRNA binding proteins, it binds directly to 16S rRNA where it helps nucleate assembly of the platform of the 30S subunit by binding and bridging several RNA helices of the 16S rRNA. Its function is as follows. Forms an intersubunit bridge (bridge B4) with the 23S rRNA of the 50S subunit in the ribosome. This is Small ribosomal subunit protein uS15 from Mannheimia succiniciproducens (strain KCTC 0769BP / MBEL55E).